The primary structure comprises 554 residues: Guanine nucleotide-binding protein alpha-2 subunit (554 aa).

Disordered regions lie at residues methionine 1 to asparagine 139 and valine 157 to glycine 183. A lipid anchor (N-myristoyl glycine) is attached at glycine 2. A lipid anchor (S-palmitoyl cysteine) is attached at cysteine 4. 2 stretches are compositionally biased toward basic and acidic residues: residues lysine 7–glycine 17 and alanine 28–glutamine 43. The span at glycine 52–serine 66 shows a compositional bias: low complexity. The segment covering glycine 67 to glycine 85 has biased composition (polar residues). Low complexity predominate over residues aspartate 91–asparagine 139. The 327-residue stretch at asparagine 228–leucine 554 folds into the G-alpha domain. A G1 motif region spans residues lysine 231–threonine 244. 14 residues coordinate GTP: glutamate 239, serine 240, glycine 241, lysine 242, serine 243, threonine 244, aspartate 351, isoleucine 376, threonine 382, glycine 405, asparagine 471, lysine 472, aspartate 474, and alanine 526. Serine 243 is a binding site for Mg(2+). The tract at residues aspartate 374–threonine 382 is G2 motif. Threonine 382 provides a ligand contact to Mg(2+). A G3 motif region spans residues leucine 398–arginine 407. The tract at residues valine 467–aspartate 474 is G4 motif. The interval threonine 524–threonine 529 is G5 motif.

The protein belongs to the G-alpha family. G proteins are composed of 3 units; alpha, beta and gamma. The alpha chain contains the guanine nucleotide binding site. Mg(2+) is required as a cofactor.

In terms of biological role, guanine nucleotide-binding proteins (G proteins) are involved as modulators or transducers in various transmembrane signaling systems. This protein may be involved in the determination of the cAMP level according to nutritional conditions, most probably as a regulator of adenylyl cyclase. In Kluyveromyces lactis (strain ATCC 8585 / CBS 2359 / DSM 70799 / NBRC 1267 / NRRL Y-1140 / WM37) (Yeast), this protein is Guanine nucleotide-binding protein alpha-2 subunit (GPA2).